Consider the following 678-residue polypeptide: Protein CASP (678 aa).

At 1–619 (MAANVGSMFQ…LVLSNKMART (619 aa)) the chain is on the cytoplasmic side. Coiled-coil stretches lie at residues 67–450 (LLKS…QDLS) and 502–556 (LSII…FLQS). Residue serine 586 is modified to Phosphoserine. The helical; Anchor for type IV membrane protein transmembrane segment at 620 to 640 (IGFFYTLFLHCLVFLVLYKLA) threads the bilayer. The Lumenal segment spans residues 641-678 (WSESMERDCATFCAKKFADHLHKFHENDNGAAAGDLWQ).

The protein belongs to the CASP family. As to quaternary structure, homodimer; disulfide-linked. Interacts with GOLGA5.

It is found in the golgi apparatus membrane. Functionally, may be involved in intra-Golgi retrograde transport. The polypeptide is Protein CASP (CUTL1) (Pongo abelii (Sumatran orangutan)).